The sequence spans 292 residues: 4-hydroxy-tetrahydrodipicolinate synthase (292 aa).

T45 contributes to the pyruvate binding site. Residue Y133 is the Proton donor/acceptor of the active site. K162 acts as the Schiff-base intermediate with substrate in catalysis. I204 serves as a coordination point for pyruvate.

It belongs to the DapA family. In terms of assembly, homotetramer; dimer of dimers.

Its subcellular location is the cytoplasm. The enzyme catalyses L-aspartate 4-semialdehyde + pyruvate = (2S,4S)-4-hydroxy-2,3,4,5-tetrahydrodipicolinate + H2O + H(+). Its pathway is amino-acid biosynthesis; L-lysine biosynthesis via DAP pathway; (S)-tetrahydrodipicolinate from L-aspartate: step 3/4. Functionally, catalyzes the condensation of (S)-aspartate-beta-semialdehyde [(S)-ASA] and pyruvate to 4-hydroxy-tetrahydrodipicolinate (HTPA). This Oleidesulfovibrio alaskensis (strain ATCC BAA-1058 / DSM 17464 / G20) (Desulfovibrio alaskensis) protein is 4-hydroxy-tetrahydrodipicolinate synthase.